The primary structure comprises 213 residues: Small ribosomal subunit protein uS3 (213 aa).

Positions 38 to 106 (IRKYVKEKIF…EFALEVSEIR (69 aa)) constitute a KH type-2 domain.

The protein belongs to the universal ribosomal protein uS3 family. In terms of assembly, part of the 30S ribosomal subunit. Forms a tight complex with proteins S10 and S14.

Functionally, binds the lower part of the 30S subunit head. Binds mRNA in the 70S ribosome, positioning it for translation. This Maridesulfovibrio salexigens (strain ATCC 14822 / DSM 2638 / NCIMB 8403 / VKM B-1763) (Desulfovibrio salexigens) protein is Small ribosomal subunit protein uS3.